The following is a 475-amino-acid chain: 3-isopropylmalate dehydratase large subunit (475 aa).

[4Fe-4S] cluster is bound by residues cysteine 353, cysteine 414, and cysteine 417.

Belongs to the aconitase/IPM isomerase family. LeuC type 1 subfamily. In terms of assembly, heterodimer of LeuC and LeuD. [4Fe-4S] cluster is required as a cofactor.

It catalyses the reaction (2R,3S)-3-isopropylmalate = (2S)-2-isopropylmalate. It participates in amino-acid biosynthesis; L-leucine biosynthesis; L-leucine from 3-methyl-2-oxobutanoate: step 2/4. In terms of biological role, catalyzes the isomerization between 2-isopropylmalate and 3-isopropylmalate, via the formation of 2-isopropylmaleate. The sequence is that of 3-isopropylmalate dehydratase large subunit from Ectopseudomonas mendocina (strain ymp) (Pseudomonas mendocina).